The chain runs to 359 residues: Probable dual-specificity RNA methyltransferase RlmN (359 aa).

Glu91 (proton acceptor) is an active-site residue. The 233-residue stretch at Gln97–Arg329 folds into the Radical SAM core domain. An intrachain disulfide couples Cys104 to Cys340. Residues Cys111, Cys115, and Cys118 each coordinate [4Fe-4S] cluster. Residues Gly163 to Glu164, Ser195, Ser218 to His220, and Asn296 contribute to the S-adenosyl-L-methionine site. Catalysis depends on Cys340, which acts as the S-methylcysteine intermediate.

This sequence belongs to the radical SAM superfamily. RlmN family. It depends on [4Fe-4S] cluster as a cofactor.

It is found in the cytoplasm. It carries out the reaction adenosine(2503) in 23S rRNA + 2 reduced [2Fe-2S]-[ferredoxin] + 2 S-adenosyl-L-methionine = 2-methyladenosine(2503) in 23S rRNA + 5'-deoxyadenosine + L-methionine + 2 oxidized [2Fe-2S]-[ferredoxin] + S-adenosyl-L-homocysteine. It catalyses the reaction adenosine(37) in tRNA + 2 reduced [2Fe-2S]-[ferredoxin] + 2 S-adenosyl-L-methionine = 2-methyladenosine(37) in tRNA + 5'-deoxyadenosine + L-methionine + 2 oxidized [2Fe-2S]-[ferredoxin] + S-adenosyl-L-homocysteine. Functionally, specifically methylates position 2 of adenine 2503 in 23S rRNA and position 2 of adenine 37 in tRNAs. In Streptococcus pyogenes serotype M5 (strain Manfredo), this protein is Probable dual-specificity RNA methyltransferase RlmN.